Here is a 231-residue protein sequence, read N- to C-terminus: Phosphatidylserine decarboxylase proenzyme (231 aa).

The Schiff-base intermediate with substrate; via pyruvic acid role is filled by Ser-188. Ser-188 is modified (pyruvic acid (Ser); by autocatalysis).

Belongs to the phosphatidylserine decarboxylase family. PSD-A subfamily. In terms of assembly, heterodimer of a large membrane-associated beta subunit and a small pyruvoyl-containing alpha subunit. The cofactor is pyruvate. Is synthesized initially as an inactive proenzyme. Formation of the active enzyme involves a self-maturation process in which the active site pyruvoyl group is generated from an internal serine residue via an autocatalytic post-translational modification. Two non-identical subunits are generated from the proenzyme in this reaction, and the pyruvate is formed at the N-terminus of the alpha chain, which is derived from the carboxyl end of the proenzyme. The post-translation cleavage follows an unusual pathway, termed non-hydrolytic serinolysis, in which the side chain hydroxyl group of the serine supplies its oxygen atom to form the C-terminus of the beta chain, while the remainder of the serine residue undergoes an oxidative deamination to produce ammonia and the pyruvoyl prosthetic group on the alpha chain.

It is found in the cell membrane. It carries out the reaction a 1,2-diacyl-sn-glycero-3-phospho-L-serine + H(+) = a 1,2-diacyl-sn-glycero-3-phosphoethanolamine + CO2. The protein operates within phospholipid metabolism; phosphatidylethanolamine biosynthesis; phosphatidylethanolamine from CDP-diacylglycerol: step 2/2. Catalyzes the formation of phosphatidylethanolamine (PtdEtn) from phosphatidylserine (PtdSer). In Rickettsia prowazekii (strain Madrid E), this protein is Phosphatidylserine decarboxylase proenzyme.